The chain runs to 302 residues: tRNA pseudouridine synthase B (302 aa).

H40 is a binding site for substrate. The active-site Nucleophile is D45. Y73, Y178, and L199 together coordinate substrate.

Belongs to the pseudouridine synthase TruB family. Type 1 subfamily.

The catalysed reaction is uridine(55) in tRNA = pseudouridine(55) in tRNA. Functionally, responsible for synthesis of pseudouridine from uracil-55 in the psi GC loop of transfer RNAs. This chain is tRNA pseudouridine synthase B, found in Buchnera aphidicola subsp. Baizongia pistaciae (strain Bp).